The primary structure comprises 188 residues: Thymidine kinase (188 aa).

Residue 17–24 (GPMFAGKT) participates in ATP binding. Catalysis depends on glutamate 92, which acts as the Proton acceptor. Phenylalanine 121 contributes to the substrate binding site. Zn(2+)-binding residues include cysteine 146 and cysteine 149. Residue 166 to 170 (LILAG) participates in substrate binding. Zn(2+)-binding residues include cysteine 179 and cysteine 182.

It belongs to the thymidine kinase family.

The catalysed reaction is thymidine + ATP = dTMP + ADP + H(+). Its function is as follows. Phosphorylates thymidine. ASFV replicates in the cytoplasm of infected cells and contains genes encoding a number of enzymes needed for DNA synthesis, including thymidine kinase. Important for growth in swine macrophages in vitro and is a virus virulence factor in swine. The sequence is that of Thymidine kinase from Ornithodoros (relapsing fever ticks).